The sequence spans 237 residues: MGRKWNNIKEKKASKDKNTSRVYAKFGREIYVAAKQGEPDPESNQALKVVLERAKTYSVPRAIVDRAIEKAKGGAEENFDVLRYEGFGPSGSMVIVETLTNNVNRTASDVRAAFGKNGGNMGVSGSVAYMFDATAIFAFEGKTADDILELMMEADIDVRDILEEEESVIIYAEPEQFHAVQETLKEAGITDFSVAELVMLAQNEVTLSDEDVQQFEKMIDALEDLEDVQQVYHNVEL.

It belongs to the TACO1 family. YeeN subfamily.

The protein resides in the cytoplasm. The polypeptide is Probable transcriptional regulatory protein Exig_1693 (Exiguobacterium sibiricum (strain DSM 17290 / CCUG 55495 / CIP 109462 / JCM 13490 / 255-15)).